We begin with the raw amino-acid sequence, 146 residues long: Peptide methionine sulfoxide reductase MsrB (146 aa).

Residues 2–125 (LKKNKDELND…NSAAVQFIPY (124 aa)) form the MsrB domain. Cysteine 114 functions as the Nucleophile in the catalytic mechanism.

This sequence belongs to the MsrB Met sulfoxide reductase family.

The enzyme catalyses L-methionyl-[protein] + [thioredoxin]-disulfide + H2O = L-methionyl-(R)-S-oxide-[protein] + [thioredoxin]-dithiol. This chain is Peptide methionine sulfoxide reductase MsrB, found in Staphylococcus carnosus (strain TM300).